Consider the following 445-residue polypeptide: MSMTPREIVHELNRHIIGQDDAKRAVAIALRNRWRRMQLPEELRVEVTPKNILMIGPTGVGKTEIARRLAKLANAPFIKVEATKFTEVGYVGRDVESIIRDLADAALKLLREQEMTKVSHRAEDAAEERILDALLPPARMGFNEDAAPASDSNTRQLFRKRLREGQLDDKEIEIEVAEVSGVDISAPPGMEEMTSQLQNLFANMGKGKKKSRKLKVKEALKLVRDEEAGRLVNEEELKAKALEAVEQHGIVFIDEIDKVAKRGNSGGVDVSREGVQRDLLPLIEGCTVNTKLGMVKTDHILFIASGAFHLSKPSDLVPELQGRLPIRVELKALTPGDFERILSEPHASLTEQYRELLKTEGLGIEFQPDGIKRLAEIAWQVNEKTENIGARRLHTLLERLLEEVSFSAGDLAGAQNGEVIKIDADYVNSHLGELAQNEDLSRYIL.

ATP-binding positions include isoleucine 17, 59–64 (GVGKTE), aspartate 254, glutamate 319, and arginine 391.

This sequence belongs to the ClpX chaperone family. HslU subfamily. In terms of assembly, a double ring-shaped homohexamer of HslV is capped on each side by a ring-shaped HslU homohexamer. The assembly of the HslU/HslV complex is dependent on binding of ATP.

The protein localises to the cytoplasm. Functionally, ATPase subunit of a proteasome-like degradation complex; this subunit has chaperone activity. The binding of ATP and its subsequent hydrolysis by HslU are essential for unfolding of protein substrates subsequently hydrolyzed by HslV. HslU recognizes the N-terminal part of its protein substrates and unfolds these before they are guided to HslV for hydrolysis. This chain is ATP-dependent protease ATPase subunit HslU, found in Pseudomonas fluorescens (strain SBW25).